The primary structure comprises 188 residues: Elongation factor P (188 aa).

Position 34 is an N6-(3,6-diaminohexanoyl)-5-hydroxylysine (Lys34).

Belongs to the elongation factor P family. May be beta-lysylated on the epsilon-amino group of Lys-34 by the combined action of EpmA and EpmB, and then hydroxylated on the C5 position of the same residue by EpmC (if this protein is present). Lysylation is critical for the stimulatory effect of EF-P on peptide-bond formation. The lysylation moiety may extend toward the peptidyltransferase center and stabilize the terminal 3-CCA end of the tRNA. Hydroxylation of the C5 position on Lys-34 may allow additional potential stabilizing hydrogen-bond interactions with the P-tRNA.

It is found in the cytoplasm. Its pathway is protein biosynthesis; polypeptide chain elongation. In terms of biological role, involved in peptide bond synthesis. Alleviates ribosome stalling that occurs when 3 or more consecutive Pro residues or the sequence PPG is present in a protein, possibly by augmenting the peptidyl transferase activity of the ribosome. Modification of Lys-34 is required for alleviation. The sequence is that of Elongation factor P from Stenotrophomonas maltophilia (strain R551-3).